The primary structure comprises 64 residues: Alpha-mammal toxin Lqh2 (64 aa).

Residues 2-64 enclose the LCN-type CS-alpha/beta domain; that stretch reads KDGYIVDDVN…VRTKGPGRCR (63 aa). Intrachain disulfides connect C12–C63, C16–C36, C22–C46, and C26–C48. Residue R64 is modified to Arginine amide.

It belongs to the long (4 C-C) scorpion toxin superfamily. Sodium channel inhibitor family. Alpha subfamily. Expressed by the venom gland.

Its subcellular location is the secreted. Alpha toxins bind voltage-independently at site-3 of sodium channels (Nav) and inhibit the inactivation of the activated channels, thereby blocking neuronal transmission. The dissociation is voltage-dependent. Is active on mammals and competes for alpha-toxins binding on both mammalian and cockroach sodium channels. This Leiurus hebraeus (Hebrew deathstalker scorpion) protein is Alpha-mammal toxin Lqh2.